The following is a 189-amino-acid chain: Glutathione-dependent formaldehyde-activating enzyme (189 aa).

Positions 20 to 167 constitute a CENP-V/GFA domain; that stretch reads FAGGTLVCKC…LKELGLEPYD (148 aa). 7 residues coordinate Zn(2+): C27, C29, C48, C50, C53, C95, and C98.

It belongs to the Gfa family. Zn(2+) serves as cofactor.

It carries out the reaction S-(hydroxymethyl)glutathione = glutathione + formaldehyde. It participates in one-carbon metabolism; formaldehyde degradation; formate from formaldehyde (glutathione route): step 1/3. Catalyzes the condensation of formaldehyde and glutathione to S-hydroxymethylglutathione. This chain is Glutathione-dependent formaldehyde-activating enzyme, found in Rhodopseudomonas palustris (strain BisB18).